The sequence spans 466 residues: Transcription factor eupR (466 aa).

The span at 1 to 18 shows a compositional bias: polar residues; that stretch reads MFSTEPRSDTAPGSPSCS. Residues 1-22 form a disordered region; that stretch reads MFSTEPRSDTAPGSPSCSETKR. Positions 32-62 form a DNA-binding region, zn(2)-C6 fungal-type; the sequence is CWECKRRKVKCSYSNPSDPRCIGCRRRGTKC.

The protein resides in the nucleus. Functionally, transcription factor; part of the gene cluster that mediates the biosynthesis of eupenifeldin, a bistropolone meroterpenoid that acts as an antitumor agent. The chain is Transcription factor eupR from Phoma sp.